We begin with the raw amino-acid sequence, 61 residues long: Large ribosomal subunit protein bL32 (61 aa).

The segment covering M1–R16 has biased composition (basic residues). The segment at M1–L44 is disordered. The span at V28–L44 shows a compositional bias: basic and acidic residues.

It belongs to the bacterial ribosomal protein bL32 family.

The chain is Large ribosomal subunit protein bL32 from Methylobacterium nodulans (strain LMG 21967 / CNCM I-2342 / ORS 2060).